We begin with the raw amino-acid sequence, 424 residues long: UDP-N-acetylglucosamine 1-carboxyvinyltransferase (424 aa).

Lys-22–Asn-23 lines the phosphoenolpyruvate pocket. Arg-95 is a UDP-N-acetyl-alpha-D-glucosamine binding site. The active-site Proton donor is Cys-119. 2-(S-cysteinyl)pyruvic acid O-phosphothioketal is present on Cys-119. Residues Arg-124–Gln-128, Asp-311, and Ile-333 contribute to the UDP-N-acetyl-alpha-D-glucosamine site.

It belongs to the EPSP synthase family. MurA subfamily.

Its subcellular location is the cytoplasm. It carries out the reaction phosphoenolpyruvate + UDP-N-acetyl-alpha-D-glucosamine = UDP-N-acetyl-3-O-(1-carboxyvinyl)-alpha-D-glucosamine + phosphate. Its pathway is cell wall biogenesis; peptidoglycan biosynthesis. In terms of biological role, cell wall formation. Adds enolpyruvyl to UDP-N-acetylglucosamine. The chain is UDP-N-acetylglucosamine 1-carboxyvinyltransferase from Polaromonas sp. (strain JS666 / ATCC BAA-500).